Here is a 4011-residue protein sequence, read N- to C-terminus: Hybrid PKS-NRPS synthetase mycA (4011 aa).

The Ketosynthase family 3 (KS3) domain maps to Asn-12–Asn-451. Active-site for beta-ketoacyl synthase activity residues include Cys-185, His-324, and His-373. Residues Val-576–Ser-903 are acyl transferase (AT) domain. Residues Asn-977–Thr-1113 are N-terminal hotdog fold. One can recognise a PKS/mFAS DH domain in the interval Asn-977–Gln-1290. Residues Pro-978–Arg-1287 form a dehydratase (DH) domain region. His-1009 serves as the catalytic Proton acceptor; for dehydratase activity. The interval Thr-1135–Gln-1290 is C-terminal hotdog fold. Asp-1195 acts as the Proton donor; for dehydratase activity in catalysis. The tract at residues Tyr-1434 to Glu-1626 is methyltransferase (MT) domain. Positions Thr-2138–Val-2311 are ketoreductase (KR)domain. The Carrier 1 domain occupies Asp-2429–Leu-2504. Ser-2464 is modified (O-(pantetheine 4'-phosphoryl)serine). Positions Ala-2519 to Ala-2607 are disordered. The segment covering Pro-2559–Thr-2578 has biased composition (polar residues). A condensation region spans residues Glu-2604–Pro-2975. Residues Ile-3009 to Asp-3414 form an adenylation region. The segment at Ala-3525–Gln-3544 is disordered. The segment covering Asn-3535–Gln-3544 has biased composition (polar residues). The 81-residue stretch at Pro-3541–Ala-3621 folds into the Carrier 2 domain. At Ser-3581 the chain carries O-(pantetheine 4'-phosphoryl)serine. Residues Val-3671 to Glu-3978 are reductase-like.

In the C-terminal section; belongs to the NRP synthetase family.

It carries out the reaction L-leucine + 8 malonyl-CoA + 4 S-adenosyl-L-methionine + ATP + 9 NADPH + 12 H(+) = (5S)-5-(2-methylpropyl)-3-[(2E,6R,8E,10E,12E)-6,8,10,12-tetramethyltetradeca-2,8,10,12-tetraenoyl]-2,5-dihydro-1H-pyrrol-2-one + AMP + 4 S-adenosyl-L-homocysteine + 8 CO2 + diphosphate + 9 NADP(+) + 8 CoA + 7 H2O. The protein operates within mycotoxin biosynthesis. Its function is as follows. Hybrid PKS-NRPS synthetase; part of the gene cluster that mediates the biosynthesis of myceliothermophins, mycotoxins that contain a trans-fused decalin ring system connected to a conjugated 3-pyrrolin-2-one moiety and that have potential anti-tumor properties. The polyketide synthase module (PKS) of the PKS-NRPS mycA is responsible for the synthesis of the octaketide backbone. The downstream nonribosomal peptide synthetase (NRPS) module then amidates the carboxyl end of the octaketide with a leucine. A reductase-like domain (R) at the C-terminus catalyzes the reductive release of the polyketide-amino acid intermediate. Because mycA lacks a designated enoylreductase (ER) domain, the required activity is provided the enoyl reductase mycC. Following mycA-catalyzed construction and release of aminoacyl polyketide aldehyde, Knoevenagel condensation yields the expected ketone. This C18 keto acyclic precursor is the substrate of the Diels-Alderase mycB, that catalyzes the Diels-Alder cycloaddition to produce myceliothermophin E. A yet unknown oxygenase involved in the production of myceliothermophin A, via substitution with a hydroxyl group at the C21, has still to be identified. This chain is Hybrid PKS-NRPS synthetase mycA, found in Thermothelomyces thermophilus (strain ATCC 42464 / BCRC 31852 / DSM 1799) (Sporotrichum thermophile).